A 1043-amino-acid chain; its full sequence is Unconventional myosin-Ia (1043 aa).

Residues 8–694 enclose the Myosin motor domain; that stretch reads VGVEDLILLE…TLFYLEEQRR (687 aa). Residue 101-108 participates in ATP binding; it reads GESGAGKT. The interval 571–593 is actin-binding; sequence VAVLMKNLYSKNPNYIRCIKPND. IQ domains are found at residues 697–719, 720–742, and 743–772; these read LQQL…HYQQ, MRKS…HYGK, and IRSS…SGAA. One can recognise a TH1 domain in the interval 858 to 1042; that stretch reads KASYPQSVPI…KGSNAMEVTV (185 aa).

This sequence belongs to the TRAFAC class myosin-kinesin ATPase superfamily. Myosin family. Phosphorylated by ALPK1.

Functionally, involved in directing the movement of organelles along actin filaments. The chain is Unconventional myosin-Ia (Myo1a) from Mus musculus (Mouse).